The chain runs to 80 residues: Styelin-C (80 aa).

The N-terminal stretch at 1 to 22 is a signal peptide; sequence MQMKATILIVLVALFMIQQSEA. Trp-24 is subject to 6'-bromotryptophan. Residue Leu-53 is modified to Leucine amide. Residues 55–80 constitute a propeptide, removed in mature form; it reads DMTDEEFQEFMQDIEQAREEELLSRQ.

It is found in the secreted. Functionally, bactericidal against several Gram-positive and Gram-negative bacteria. In Styela clava (Sea squirt), this protein is Styelin-C.